The chain runs to 336 residues: Atypical chemokine receptor 1 (336 aa).

Topologically, residues 1–63 (MGNCLHTAEL…CNLLDDSALP (63 aa)) are extracellular. N16, N27, and N33 each carry an N-linked (GlcNAc...) asparagine glycan. Cystine bridges form between C51–C276 and C129–C195. Residues 64–84 (FFILTSVLGILASSTVLFILF) traverse the membrane as a helical segment. Residues 85–95 (RPLFRWQLCPG) lie on the Cytoplasmic side of the membrane. A helical transmembrane segment spans residues 96 to 116 (WPVLAQLAVGSALFSIVVPIL). Topologically, residues 117 to 129 (APGLGSTHSSALC) are extracellular. Residues 130–153 (SLGYCVWYGSAFAQALLLGCHASL) traverse the membrane as a helical segment. Over 154–166 (GHRLGAGQVPGLT) the chain is Cytoplasmic. Residues 167 to 187 (LGLTVGIWGVAALLTLPVTLA) traverse the membrane as a helical segment. Residues 188 to 207 (SGASGGLCTPIHSTELKALQ) lie on the Extracellular side of the membrane. A helical transmembrane segment spans residues 208 to 228 (ATHTVACLAIFVLLPLGLFGA). The Cytoplasmic segment spans residues 229–244 (KGLKKALGMGPGPWMN). A helical membrane pass occupies residues 245–265 (ILWAWFIFWWPHGVVLGLDFL). Over 266 to 287 (VRSKLLLLSTCLAQQALDLLLN) the chain is Extracellular. Residues 288-308 (LAEALAILHCVATPLILALFY) form a helical membrane-spanning segment. Over 309 to 336 (HQATRTLLPSLPLPEGWSSHLDTLGSKS) the chain is Cytoplasmic.

The protein belongs to the G-protein coupled receptor 1 family. Atypical chemokine receptor subfamily.

The protein localises to the early endosome. It is found in the recycling endosome. Its subcellular location is the membrane. In terms of biological role, atypical chemokine receptor that controls chemokine levels and localization via high-affinity chemokine binding that is uncoupled from classic ligand-driven signal transduction cascades, resulting instead in chemokine sequestration, degradation, or transcytosis. Also known as interceptor (internalizing receptor) or chemokine-scavenging receptor or chemokine decoy receptor. Has a promiscuous chemokine-binding profile, interacting with inflammatory chemokines of both the CXC and the CC subfamilies but not with homeostatic chemokines. Acts as a receptor for chemokines including CCL2, CCL5, CCL7, CCL11, CCL13, CCL14, CCL17, CXCL5, CXCL6, IL8/CXCL8, CXCL11, GRO, RANTES, MCP-1 and TARC. May regulate chemokine bioavailability and, consequently, leukocyte recruitment through two distinct mechanisms: when expressed in endothelial cells, it sustains the abluminal to luminal transcytosis of tissue-derived chemokines and their subsequent presentation to circulating leukocytes; when expressed in erythrocytes, serves as blood reservoir of cognate chemokines but also as a chemokine sink, buffering potential surges in plasma chemokine levels. This Gorilla gorilla gorilla (Western lowland gorilla) protein is Atypical chemokine receptor 1 (ACKR1).